The following is a 483-amino-acid chain: Siroheme synthase (483 aa).

A precorrin-2 dehydrogenase /sirohydrochlorin ferrochelatase region spans residues 1–203; the sequence is MNYFPIFANL…RQNTLAEREL (203 aa). NAD(+) contacts are provided by residues 22–23 and 43–44; these read AV and KH. A Phosphoserine modification is found at Ser-128. The tract at residues 217–483 is uroporphyrinogen-III C-methyltransferase; that stretch reads GSVSLVGAGP…GGLNAGQRAA (267 aa). Residue Pro-226 participates in S-adenosyl-L-methionine binding. Asp-249 functions as the Proton acceptor in the catalytic mechanism. The active-site Proton donor is the Lys-271. Residues 302–304, Val-307, 332–333, Met-384, and Gly-413 each bind S-adenosyl-L-methionine; these read GGD and TA.

The protein in the N-terminal section; belongs to the precorrin-2 dehydrogenase / sirohydrochlorin ferrochelatase family. It in the C-terminal section; belongs to the precorrin methyltransferase family.

It carries out the reaction uroporphyrinogen III + 2 S-adenosyl-L-methionine = precorrin-2 + 2 S-adenosyl-L-homocysteine + H(+). The enzyme catalyses precorrin-2 + NAD(+) = sirohydrochlorin + NADH + 2 H(+). The catalysed reaction is siroheme + 2 H(+) = sirohydrochlorin + Fe(2+). It functions in the pathway cofactor biosynthesis; adenosylcobalamin biosynthesis; precorrin-2 from uroporphyrinogen III: step 1/1. Its pathway is cofactor biosynthesis; adenosylcobalamin biosynthesis; sirohydrochlorin from precorrin-2: step 1/1. The protein operates within porphyrin-containing compound metabolism; siroheme biosynthesis; precorrin-2 from uroporphyrinogen III: step 1/1. It participates in porphyrin-containing compound metabolism; siroheme biosynthesis; siroheme from sirohydrochlorin: step 1/1. It functions in the pathway porphyrin-containing compound metabolism; siroheme biosynthesis; sirohydrochlorin from precorrin-2: step 1/1. Its function is as follows. Multifunctional enzyme that catalyzes the SAM-dependent methylations of uroporphyrinogen III at position C-2 and C-7 to form precorrin-2 via precorrin-1. Then it catalyzes the NAD-dependent ring dehydrogenation of precorrin-2 to yield sirohydrochlorin. Finally, it catalyzes the ferrochelation of sirohydrochlorin to yield siroheme. The protein is Siroheme synthase of Neisseria meningitidis serogroup B (strain ATCC BAA-335 / MC58).